The sequence spans 387 residues: Eukaryotic translation initiation factor 3 subunit M (387 aa).

Residues 181 to 340 (LSSKVMIELL…RKVHISSTMH (160 aa)) form the PCI domain.

This sequence belongs to the eIF-3 subunit M family. In terms of assembly, component of the eukaryotic translation initiation factor 3 (eIF-3) complex. The eIF-3 complex interacts with pix.

The protein localises to the cytoplasm. It localises to the golgi apparatus. Its function is as follows. Component of the eukaryotic translation initiation factor 3 (eIF-3) complex, which is involved in protein synthesis of a specialized repertoire of mRNAs and, together with other initiation factors, stimulates binding of mRNA and methionyl-tRNAi to the 40S ribosome. The eIF-3 complex specifically targets and initiates translation of a subset of mRNAs involved in cell proliferation. In Drosophila mojavensis (Fruit fly), this protein is Eukaryotic translation initiation factor 3 subunit M.